The chain runs to 319 residues: L-lactate dehydrogenase (319 aa).

Residues Val17, Asp38, Lys43, Tyr69, and Gly83–Ala84 each bind NAD(+). 2 residues coordinate substrate: Gln86 and Arg92. Residues Thr105, Ala122–Asn124, and Ser147 each bind NAD(+). Asn124–Asp127 serves as a coordination point for substrate. Asp152–Arg155 is a binding site for substrate. Beta-D-fructose 1,6-bisphosphate contacts are provided by Arg157 and His172. The Proton acceptor role is filled by His179. Position 224 is a phosphotyrosine (Tyr224). Thr233 serves as a coordination point for substrate.

It belongs to the LDH/MDH superfamily. LDH family. As to quaternary structure, homotetramer.

The protein resides in the cytoplasm. The catalysed reaction is (S)-lactate + NAD(+) = pyruvate + NADH + H(+). It participates in fermentation; pyruvate fermentation to lactate; (S)-lactate from pyruvate: step 1/1. Allosterically activated by fructose 1,6-bisphosphate (FBP). Functionally, catalyzes the conversion of lactate to pyruvate. In Geobacillus sp. (strain WCH70), this protein is L-lactate dehydrogenase.